The chain runs to 130 residues: Glycine cleavage system H protein (130 aa).

The Lipoyl-binding domain occupies 22 to 103 (KAYIGISDCA…PYGSWIAAIE (82 aa)). An N6-lipoyllysine modification is found at Lys-63.

This sequence belongs to the GcvH family. In terms of assembly, the glycine cleavage system is composed of four proteins: P, T, L and H. It depends on (R)-lipoate as a cofactor.

Its function is as follows. The glycine cleavage system catalyzes the degradation of glycine. The H protein shuttles the methylamine group of glycine from the P protein to the T protein. In Clostridium botulinum (strain Okra / Type B1), this protein is Glycine cleavage system H protein.